A 705-amino-acid polypeptide reads, in one-letter code: Tetratricopeptide repeat protein 12 (705 aa).

Thr71 bears the Phosphothreonine mark. TPR repeat units lie at residues 106–139 (ADAL…LKDM), 140–173 (KVLY…DEKC), and 174–207 (TKAY…NPKL).

Expressed in testis and in epithelial cells of trachea and bronchial tube.

The protein resides in the cytoplasm. In terms of biological role, cytoplasmic protein that plays a role in the proper assembly of dynein arm complexes in motile cilia in both respiratory cells and sperm flagella. This chain is Tetratricopeptide repeat protein 12 (TTC12), found in Homo sapiens (Human).